The following is a 295-amino-acid chain: UDP-N-acetylenolpyruvoylglucosamine reductase (295 aa).

In terms of domain architecture, FAD-binding PCMH-type spans 23-188 (KVGGPADFLA…ISAKFALKPG (166 aa)). The active site involves R167. S217 acts as the Proton donor in catalysis. Residue E287 is part of the active site.

It belongs to the MurB family. Requires FAD as cofactor.

It is found in the cytoplasm. It carries out the reaction UDP-N-acetyl-alpha-D-muramate + NADP(+) = UDP-N-acetyl-3-O-(1-carboxyvinyl)-alpha-D-glucosamine + NADPH + H(+). It participates in cell wall biogenesis; peptidoglycan biosynthesis. Functionally, cell wall formation. This Streptococcus pyogenes serotype M18 (strain MGAS8232) protein is UDP-N-acetylenolpyruvoylglucosamine reductase.